The following is a 171-amino-acid chain: MEFPDLGKHCSEPTCKQLDFLPITCDACKQDFCKDHFSYSGHKCPFAFKKDVQVPVCPLCNAPIPVRRGDIPDVVVGEHMDRDCTFHPGRNRNKVFTHRCSKEGCRKKEMLQLACAQCHGNFCIQHRHPLDHNCQAGSSSVSRGRSSASRAAEQKPSGVSWLAQRLRRTVK.

2 AN1-type zinc fingers span residues 4 to 52 (PDLG…KKDV) and 94 to 142 (KVFT…SSVS). The Zn(2+) site is built by Cys10, Cys15, Cys25, Cys28, Cys33, His36, His42, Cys44, Cys100, Cys105, Cys115, Cys118, Cys123, His126, His132, and Cys134. The interval 135-171 (QAGSSSVSRGRSSASRAAEQKPSGVSWLAQRLRRTVK) is disordered. The segment covering 136–151 (AGSSSVSRGRSSASRA) has biased composition (low complexity).

The protein resides in the cytoplasm. The protein localises to the nucleus. The protein is AN1-type zinc finger protein 2A (Zfand2a) of Rattus norvegicus (Rat).